The sequence spans 286 residues: Bifunctional protein FolD (286 aa).

NADP(+) contacts are provided by residues 165-167, S190, and V231; that span reads GRS.

This sequence belongs to the tetrahydrofolate dehydrogenase/cyclohydrolase family. As to quaternary structure, homodimer.

The catalysed reaction is (6R)-5,10-methylene-5,6,7,8-tetrahydrofolate + NADP(+) = (6R)-5,10-methenyltetrahydrofolate + NADPH. It carries out the reaction (6R)-5,10-methenyltetrahydrofolate + H2O = (6R)-10-formyltetrahydrofolate + H(+). The protein operates within one-carbon metabolism; tetrahydrofolate interconversion. In terms of biological role, catalyzes the oxidation of 5,10-methylenetetrahydrofolate to 5,10-methenyltetrahydrofolate and then the hydrolysis of 5,10-methenyltetrahydrofolate to 10-formyltetrahydrofolate. This is Bifunctional protein FolD from Bacillus anthracis (strain A0248).